Reading from the N-terminus, the 285-residue chain is uncharacterized protein (285 aa).

The chain crosses the membrane as a helical span at residues isoleucine 6–tryptophan 26.

Belongs to the membrane fusion protein (MFP) (TC 8.A.1) family.

Its subcellular location is the membrane. This is an uncharacterized protein from Escherichia coli (strain K12).